The sequence spans 313 residues: Porphobilinogen deaminase (313 aa).

Cysteine 242 carries the S-(dipyrrolylmethanemethyl)cysteine modification.

Belongs to the HMBS family. In terms of assembly, monomer. It depends on dipyrromethane as a cofactor.

It catalyses the reaction 4 porphobilinogen + H2O = hydroxymethylbilane + 4 NH4(+). The protein operates within porphyrin-containing compound metabolism; protoporphyrin-IX biosynthesis; coproporphyrinogen-III from 5-aminolevulinate: step 2/4. Its function is as follows. Tetrapolymerization of the monopyrrole PBG into the hydroxymethylbilane pre-uroporphyrinogen in several discrete steps. The protein is Porphobilinogen deaminase of Escherichia coli O6:H1 (strain CFT073 / ATCC 700928 / UPEC).